The primary structure comprises 474 residues: Glutathione synthetase (474 aa).

The residue at position 2 (Ala-2) is an N-acetylalanine. Position 125 (Arg-125) interacts with substrate. Position 144 (Glu-144) interacts with ATP. Residues Glu-144 and Asn-146 each coordinate Mg(2+). Substrate is bound by residues 148–151, 214–216, Gln-220, and 267–270; these read VSAS, ERN, and RDGY. ATP is bound by residues Lys-305, 364–373, Tyr-375, and 398–401; these read KPQREGGGNN and MEKI. Glu-368 contacts Mg(2+). Ser-415 carries the post-translational modification Phosphoserine. Glu-425 serves as a coordination point for ATP. Arg-450 contacts substrate. ATP contacts are provided by Lys-452 and Asp-458. 461 to 462 lines the substrate pocket; the sequence is VA.

It belongs to the eukaryotic GSH synthase family. In terms of assembly, homodimer. Mg(2+) is required as a cofactor.

The catalysed reaction is gamma-L-glutamyl-L-cysteine + glycine + ATP = glutathione + ADP + phosphate + H(+). It catalyses the reaction gamma-L-glutamyl-(2S)-2-aminobutanoate + glycine + ATP = ophthalmate + ADP + phosphate + H(+). The protein operates within sulfur metabolism; glutathione biosynthesis; glutathione from L-cysteine and L-glutamate: step 2/2. In terms of biological role, catalyzes the production of glutathione from gamma-glutamylcysteine and glycine in an ATP-dependent manner. Glutathione (gamma-glutamylcysteinylglycine, GSH) is the most abundant intracellular thiol in living aerobic cells and is required for numerous processes including the protection of cells against oxidative damage, amino acid transport, the detoxification of foreign compounds, the maintenance of protein sulfhydryl groups in a reduced state and acts as a cofactor for a number of enzymes. Participates in ophthalmate biosynthesis in hepatocytes. This Bos taurus (Bovine) protein is Glutathione synthetase.